Here is a 257-residue protein sequence, read N- to C-terminus: Snake venom serine protease Dav-KN (257 aa).

Residues 1 to 18 form the signal peptide; the sequence is MVLIRVLANLLILQLSYA. Residues 19 to 24 constitute a propeptide that is removed on maturation; sequence QKSSEL. One can recognise a Peptidase S1 domain in the interval 25–248; that stretch reads VIGGDECNIN…HLDWIKGIIA (224 aa). 5 cysteine pairs are disulfide-bonded: C31–C162, C49–C65, C97–C255, C173–C188, and C199–C224. Residues H64 and D109 each act as charge relay system in the active site. Catalysis depends on S203, which acts as the Charge relay system.

Belongs to the peptidase S1 family. Snake venom subfamily. Monomer. Expressed by the venom gland.

The protein localises to the secreted. Snake venom serine protease that may act in the hemostasis system of the prey. The sequence is that of Snake venom serine protease Dav-KN from Deinagkistrodon acutus (Hundred-pace snake).